A 99-amino-acid polypeptide reads, in one-letter code: Malonate decarboxylase acyl carrier protein (99 aa).

Position 25 is an O-(phosphoribosyl dephospho-coenzyme A)serine (serine 25).

This sequence belongs to the MdcC family. Post-translationally, covalently binds the prosthetic group of malonate decarboxylase.

It is found in the cytoplasm. Its function is as follows. Subunit of malonate decarboxylase, it is an acyl carrier protein to which acetyl and malonyl thioester residues are bound via a 2'-(5''-phosphoribosyl)-3'-dephospho-CoA prosthetic group and turn over during the catalytic mechanism. The protein is Malonate decarboxylase acyl carrier protein of Pseudomonas savastanoi pv. phaseolicola (strain 1448A / Race 6) (Pseudomonas syringae pv. phaseolicola (strain 1448A / Race 6)).